Consider the following 119-residue polypeptide: Ribosome-binding factor A (119 aa).

Belongs to the RbfA family. In terms of assembly, monomer. Binds 30S ribosomal subunits, but not 50S ribosomal subunits or 70S ribosomes.

It localises to the cytoplasm. Its function is as follows. One of several proteins that assist in the late maturation steps of the functional core of the 30S ribosomal subunit. Associates with free 30S ribosomal subunits (but not with 30S subunits that are part of 70S ribosomes or polysomes). Required for efficient processing of 16S rRNA. May interact with the 5'-terminal helix region of 16S rRNA. In Coxiella burnetii (strain CbuK_Q154) (Coxiella burnetii (strain Q154)), this protein is Ribosome-binding factor A.